A 234-amino-acid chain; its full sequence is Peptidase E (234 aa).

Residues S123, D138, and H160 each act as charge relay system in the active site.

This sequence belongs to the peptidase S51 family.

Its subcellular location is the cytoplasm. The catalysed reaction is Dipeptidase E catalyzes the hydrolysis of dipeptides Asp-|-Xaa. It does not act on peptides with N-terminal Glu, Asn or Gln, nor does it cleave isoaspartyl peptides.. Its function is as follows. Hydrolyzes dipeptides containing N-terminal aspartate residues. May play a role in allowing the cell to use peptide aspartate to spare carbon otherwise required for the synthesis of the aspartate family of amino acids. The chain is Peptidase E from Actinobacillus pleuropneumoniae serotype 3 (strain JL03).